Reading from the N-terminus, the 147-residue chain is Hemoglobin anodic subunit beta (147 aa).

The region spanning 2 to 147 (EWTEDERTAI…VTSALARQYH (146 aa)) is the Globin domain. Heme b-binding residues include H63 and H92.

It belongs to the globin family. Heterotetramer of two alpha chains and two beta chains. In terms of tissue distribution, red blood cells.

Functionally, involved in oxygen transport from gills to the various peripheral tissues. This Anguilla anguilla (European freshwater eel) protein is Hemoglobin anodic subunit beta (hbb1).